A 218-amino-acid chain; its full sequence is Adenylate kinase (218 aa).

ATP is bound at residue 10–15 (GAGKGT). Positions 30–59 (STGDMLRAAVKAGTPLGIEAKKVMDAGGLM) are NMP. AMP-binding positions include threonine 31, arginine 36, 57–59 (GLM), 85–88 (GYPR), and glutamine 92. Residues 122–159 (GRWVHLASGRSYNTQSNPPKVAGQDDITGEALIQRDDD) are LID. Residues arginine 123 and 132-133 (SY) contribute to the ATP site. Arginine 156 and arginine 167 together coordinate AMP. Glycine 203 is an ATP binding site.

The protein belongs to the adenylate kinase family. As to quaternary structure, monomer.

It is found in the cytoplasm. It catalyses the reaction AMP + ATP = 2 ADP. It participates in purine metabolism; AMP biosynthesis via salvage pathway; AMP from ADP: step 1/1. Catalyzes the reversible transfer of the terminal phosphate group between ATP and AMP. Plays an important role in cellular energy homeostasis and in adenine nucleotide metabolism. The protein is Adenylate kinase of Bordetella avium (strain 197N).